A 377-amino-acid chain; its full sequence is 4-hydroxy-3-methylbut-2-en-1-yl diphosphate synthase (flavodoxin) (377 aa).

[4Fe-4S] cluster is bound by residues C275, C278, C310, and E317.

It belongs to the IspG family. Requires [4Fe-4S] cluster as cofactor.

It carries out the reaction (2E)-4-hydroxy-3-methylbut-2-enyl diphosphate + oxidized [flavodoxin] + H2O + 2 H(+) = 2-C-methyl-D-erythritol 2,4-cyclic diphosphate + reduced [flavodoxin]. Its pathway is isoprenoid biosynthesis; isopentenyl diphosphate biosynthesis via DXP pathway; isopentenyl diphosphate from 1-deoxy-D-xylulose 5-phosphate: step 5/6. Functionally, converts 2C-methyl-D-erythritol 2,4-cyclodiphosphate (ME-2,4cPP) into 1-hydroxy-2-methyl-2-(E)-butenyl 4-diphosphate. The sequence is that of 4-hydroxy-3-methylbut-2-en-1-yl diphosphate synthase (flavodoxin) from Ruegeria sp. (strain TM1040) (Silicibacter sp.).